The primary structure comprises 349 residues: Isopentenyl-diphosphate delta-isomerase (349 aa).

Residue 6-7 coordinates substrate; sequence RK. Residues 62-64, Ser93, and Asn122 contribute to the FMN site; that span reads AMT. Gln152 contacts substrate. Glu153 provides a ligand contact to Mg(2+). FMN contacts are provided by residues Lys184, Thr214, 258 to 259, and 280 to 281; these read GG and AG.

Belongs to the IPP isomerase type 2 family. As to quaternary structure, homooctamer. Dimer of tetramers. FMN serves as cofactor. It depends on NADPH as a cofactor. The cofactor is Mg(2+).

The protein resides in the cytoplasm. The catalysed reaction is isopentenyl diphosphate = dimethylallyl diphosphate. Involved in the biosynthesis of isoprenoids. Catalyzes the 1,3-allylic rearrangement of the homoallylic substrate isopentenyl (IPP) to its allylic isomer, dimethylallyl diphosphate (DMAPP). This is Isopentenyl-diphosphate delta-isomerase from Bacillus cereus (strain 03BB102).